Consider the following 378-residue polypeptide: Spermidine/putrescine import ATP-binding protein PotA (378 aa).

One can recognise an ABC transporter domain in the interval 18-248 (VQLAGIRKCF…PKNLFVAGFI (231 aa)). 50–57 (GPSGCGKT) is an ATP binding site.

This sequence belongs to the ABC transporter superfamily. Spermidine/putrescine importer (TC 3.A.1.11.1) family. As to quaternary structure, the complex is composed of two ATP-binding proteins (PotA), two transmembrane proteins (PotB and PotC) and a solute-binding protein (PotD).

Its subcellular location is the cell inner membrane. The catalysed reaction is ATP + H2O + polyamine-[polyamine-binding protein]Side 1 = ADP + phosphate + polyamineSide 2 + [polyamine-binding protein]Side 1.. In terms of biological role, part of the ABC transporter complex PotABCD involved in spermidine/putrescine import. Responsible for energy coupling to the transport system. In Shigella boydii serotype 4 (strain Sb227), this protein is Spermidine/putrescine import ATP-binding protein PotA.